We begin with the raw amino-acid sequence, 507 residues long: RNA polymerase I-specific transcription initiation factor RRN11 (507 aa).

The segment covering 37–47 (KSTTTDSLPTP) has biased composition (polar residues). Disordered regions lie at residues 37 to 76 (KSTT…LQQK) and 89 to 124 (GEIY…SDEE). Acidic residues predominate over residues 97–108 (SETDSQEEETEE). Over residues 109–124 (GGEHDTGIDKEDSDEE) the composition is skewed to basic and acidic residues.

In terms of assembly, component of the core factor (CF) complex, which consists of RRN6, RRN7 and RRN11. The CF heterotrimer may further dimerize to form a hexamer. RRN11 interacts with RRN6, RRN7 and SPT15.

Its subcellular location is the nucleus. It localises to the nucleolus. Its function is as follows. Acts as a component of the core factor (CF) complex which is essential for the initiation of rDNA transcription by RNA polymerase I. After binding of UAF (upstream activation factor) to an upstream element of the promoter, CF is recruited in a SPT15/TBP-dependent manner to form a preinitiation complex. This is RNA polymerase I-specific transcription initiation factor RRN11 (RRN11) from Saccharomyces cerevisiae (strain ATCC 204508 / S288c) (Baker's yeast).